A 588-amino-acid polypeptide reads, in one-letter code: MSSLYIKTPLHALSAGPDSHANSSYYDNLLLPSFSNLSSNISRNNITTDNNINSASPRKYSFHSLNVSPILSPISLANEILGKKSNTAPASPHHMDYNPISSLTPGNSPEFNKASLSQISFTNPLNYGSGLGFSSNSQPRLPLLDRLSSVSLSKRPERPQQSLPSLRHLQLLPSPLLQENAARFPDTSKRTSNWKTDLTHWCKDTNYQDYVKIREEVAHFKPLSIPNLTNNQNNDSFNYGKELESTRSSKFHSPSKESFDRTKLIPSILEAKDQFKDLSNNAWSITPPVTPPMSPPTNRTMERTTLRGVEASFFEGKSSNNDSIFNPIISEKLVQEVKHQRQLRGNSFPMPNASHKKTNSFKALQIKKLLANRDILSNNSKSNVRKPSKNKISKQASNVFGNTARQLVMKLDNASYSSVSASSSPSPSTPTKSGKMRSRSSSPVRPKAYTPSPRSPNYHRFALDSPPQSPRRSSNSSITKKGSRRSSGSSPTRHTTRVCVSCHSSDSPCWRPSWSPRKQDQLCNSCGLRYKKTHTRCLNDLCRKIPTKGEINIMKSNGIDKEFVPERNCEIEGYRCLFCNYITETVEN.

Ser56 carries the post-translational modification Phosphoserine. Disordered stretches follow at residues 85 to 109 (SNTAPASPHHMDYNPISSLTPGNSP), 377 to 398 (SNNSKSNVRKPSKNKISKQASN), and 417 to 495 (SSVS…TRHT). A compositionally biased stretch (polar residues) spans 99–109 (PISSLTPGNSP). Positions 383–392 (NVRKPSKNKI) are enriched in basic residues. Residues 417–433 (SSVSASSSPSPSTPTKS) are compositionally biased toward low complexity. The residue at position 465 (Ser465) is a Phosphoserine. Over residues 470–493 (PRRSSNSSITKKGSRRSSGSSPTR) the composition is skewed to low complexity. The segment at 499-526 (CVSCHSSDSPCWRPSWSPRKQDQLCNSC) adopts a GATA-type; atypical zinc-finger fold.

In terms of assembly, component of the RPD3C(L) complex composed of at least ASH1, CTI6, DEP1, PHO23, RPD3, RXT2, RXT3, SAP30, SDS3, SIN3, UME1 and UME6.

The protein resides in the nucleus. Functionally, component of the RPD3C(L) histone deacetylase complex (HDAC). Responsible for the deacetylation of lysine residues on the N-terminal part of the core histones (H2A, H2B, H3 and H4). Histone deacetylation gives a tag for epigenetic repression and plays an important role in transcriptional regulation, cell cycle progression and developmental events. ASH1 is necessary to repress HO in daughter cells to block mating-type switching through its binding to HO promoter 5'-YTGAT-3' sites. Also involved in pseudohyphal growth. The protein is Transcriptional regulatory protein ASH1 (ASH1) of Saccharomyces cerevisiae (strain ATCC 204508 / S288c) (Baker's yeast).